The following is a 255-amino-acid chain: Adenosylcobinamide-GDP ribazoletransferase (255 aa).

6 consecutive transmembrane segments (helical) span residues 43–63, 64–84, 113–133, 141–161, 195–215, and 234–254; these read LVGT…SLFF, PYQV…GAFH, IGTY…VFLT, FGLM…TLIY, LAAI…AILF, and CLGG…IAVV.

The protein belongs to the CobS family. Requires Mg(2+) as cofactor.

The protein localises to the cell inner membrane. It carries out the reaction alpha-ribazole + adenosylcob(III)inamide-GDP = adenosylcob(III)alamin + GMP + H(+). The enzyme catalyses alpha-ribazole 5'-phosphate + adenosylcob(III)inamide-GDP = adenosylcob(III)alamin 5'-phosphate + GMP + H(+). It functions in the pathway cofactor biosynthesis; adenosylcobalamin biosynthesis; adenosylcobalamin from cob(II)yrinate a,c-diamide: step 7/7. Functionally, joins adenosylcobinamide-GDP and alpha-ribazole to generate adenosylcobalamin (Ado-cobalamin). Also synthesizes adenosylcobalamin 5'-phosphate from adenosylcobinamide-GDP and alpha-ribazole 5'-phosphate. This Vibrio vulnificus (strain CMCP6) protein is Adenosylcobinamide-GDP ribazoletransferase.